Consider the following 457-residue polypeptide: Bifunctional protein GlmU (457 aa).

The interval 1 to 229 is pyrophosphorylase; that stretch reads MSNSAKSVVI…LSEMEGVNNR (229 aa). UDP-N-acetyl-alpha-D-glucosamine-binding positions include 11 to 14, lysine 25, glutamine 76, 81 to 82, 103 to 105, glycine 140, glutamate 154, asparagine 169, and asparagine 227; these read LAAG, GT, and YGD. Aspartate 105 provides a ligand contact to Mg(2+). Asparagine 227 is a binding site for Mg(2+). The interval 230-250 is linker; the sequence is LQLSALERIYQSEQAEQLLLA. The interval 251 to 457 is N-acetyltransferase; that stretch reads GVMLLDPARF…GWKRPVKEKK (207 aa). UDP-N-acetyl-alpha-D-glucosamine is bound by residues arginine 333 and lysine 351. Histidine 363 serves as the catalytic Proton acceptor. UDP-N-acetyl-alpha-D-glucosamine-binding residues include tyrosine 366 and asparagine 377. Acetyl-CoA contacts are provided by residues alanine 380, 386–387, serine 405, alanine 423, and arginine 440; that span reads NY.

It in the N-terminal section; belongs to the N-acetylglucosamine-1-phosphate uridyltransferase family. The protein in the C-terminal section; belongs to the transferase hexapeptide repeat family. In terms of assembly, homotrimer. Requires Mg(2+) as cofactor.

It is found in the cytoplasm. It catalyses the reaction alpha-D-glucosamine 1-phosphate + acetyl-CoA = N-acetyl-alpha-D-glucosamine 1-phosphate + CoA + H(+). The enzyme catalyses N-acetyl-alpha-D-glucosamine 1-phosphate + UTP + H(+) = UDP-N-acetyl-alpha-D-glucosamine + diphosphate. The protein operates within nucleotide-sugar biosynthesis; UDP-N-acetyl-alpha-D-glucosamine biosynthesis; N-acetyl-alpha-D-glucosamine 1-phosphate from alpha-D-glucosamine 6-phosphate (route II): step 2/2. It functions in the pathway nucleotide-sugar biosynthesis; UDP-N-acetyl-alpha-D-glucosamine biosynthesis; UDP-N-acetyl-alpha-D-glucosamine from N-acetyl-alpha-D-glucosamine 1-phosphate: step 1/1. It participates in bacterial outer membrane biogenesis; LPS lipid A biosynthesis. Catalyzes the last two sequential reactions in the de novo biosynthetic pathway for UDP-N-acetylglucosamine (UDP-GlcNAc). The C-terminal domain catalyzes the transfer of acetyl group from acetyl coenzyme A to glucosamine-1-phosphate (GlcN-1-P) to produce N-acetylglucosamine-1-phosphate (GlcNAc-1-P), which is converted into UDP-GlcNAc by the transfer of uridine 5-monophosphate (from uridine 5-triphosphate), a reaction catalyzed by the N-terminal domain. The polypeptide is Bifunctional protein GlmU (Photorhabdus laumondii subsp. laumondii (strain DSM 15139 / CIP 105565 / TT01) (Photorhabdus luminescens subsp. laumondii)).